A 340-amino-acid polypeptide reads, in one-letter code: MGGGVSVELPKRDPPPGVPTDEMLLNVDKMHDVIAPAKLLEYVHIGPLAKDKEDKVKKRYPEFRLVNTGPGGLSALLRQSYNGTAPNCCRTFNRTHYWKKDGKISDKYEEGAVLESCWPDVHDTGKCDVDLFDWCQGDTFDRNICHQWIGSAFNRSNRTVEGQQSLINLYNKMQTLCSKDASVPICESFLHHLRAHNTEDSKEMIDYILRQQSADFKQKYMRCSYPTRDKLEESLKYAEPRECWDPECSNANVNFLLTRNYNNLGLCNIVRCNTSVNNLQMDKTSSLRLSCGLSNSDRFSTVPVNRAKVVQHNIKHSFDLKLHLISLLSLLVIWILIVAI.

The disordered stretch occupies residues 1–20; sequence MGGGVSVELPKRDPPPGVPT. A lipid anchor (N-myristoyl glycine; by host) is attached at G2. Topologically, residues 2 to 319 are virion surface; that stretch reads GGGVSVELPK…VQHNIKHSFD (318 aa). Residues 320-340 traverse the membrane as a helical; Signal-anchor for type II membrane protein segment; sequence LKLHLISLLSLLVIWILIVAI.

The protein belongs to the orthopoxvirus OPG086 family. Interacts with OPG143. Component of the entry fusion complex (EFC) composed of OPG053, OPG076, OPG086, OPG094, OPG095, OPG099, OPG107, OPG143, OPG104, OPG147 and OPG155. Except for OPG095 and OPG053, each of the EFC proteins is required for assembly or stability of the complex. Unglycosylated because produced in viral factories instead of the classic ER -Golgi route.

It is found in the virion membrane. Functionally, component of the entry fusion complex (EFC), which consists of 11 proteins. During cell infection, this complex mediates entry of the virion core into the host cytoplasm by a two-step mechanism consisting of lipid mixing of the viral and cellular membranes and subsequent pore formation. This is Entry-fusion complex protein OPG094 (OPG094) from Vaccinia virus (strain Copenhagen) (VACV).